The sequence spans 159 residues: Large ribosomal subunit protein uL11 (159 aa).

It belongs to the universal ribosomal protein uL11 family. As to quaternary structure, part of the ribosomal stalk of the 50S ribosomal subunit. Interacts with L10 and the large rRNA to form the base of the stalk. L10 forms an elongated spine to which L12 dimers bind in a sequential fashion forming a multimeric L10(L12)X complex.

Forms part of the ribosomal stalk which helps the ribosome interact with GTP-bound translation factors. This is Large ribosomal subunit protein uL11 from Methanococcus maripaludis (strain C6 / ATCC BAA-1332).